A 466-amino-acid polypeptide reads, in one-letter code: Tetratricopeptide repeat protein 38 (466 aa).

3 TPR repeats span residues 175–212, 251–284, and 368–400; these read MPLYRQIKGMYSFGLLETRLYDEAEKMAKEALSLTPED, CHNYWHWALYHIEKGNYEAALKIFDEQVSQRCVK, and LQIAERVGLPMCQALLEFEQRNYRQAVELLKPI.

Belongs to the TTC38 family.

The protein is Tetratricopeptide repeat protein 38 (ttc38) of Danio rerio (Zebrafish).